A 507-amino-acid chain; its full sequence is Maturase K (507 aa).

This sequence belongs to the intron maturase 2 family. MatK subfamily.

It is found in the plastid. It localises to the chloroplast. Functionally, usually encoded in the trnK tRNA gene intron. Probably assists in splicing its own and other chloroplast group II introns. This chain is Maturase K, found in Magnolia champaca (Yellow jade orchid tree).